We begin with the raw amino-acid sequence, 78 residues long: Large ribosomal subunit protein uL29 (78 aa).

It belongs to the universal ribosomal protein uL29 family.

This Rhodococcus erythropolis (strain PR4 / NBRC 100887) protein is Large ribosomal subunit protein uL29.